The sequence spans 158 residues: 6,7-dimethyl-8-ribityllumazine synthase (158 aa).

5-amino-6-(D-ribitylamino)uracil contacts are provided by residues phenylalanine 23, 61–63 (SFE), and 85–87 (AVI). 90-91 (ET) serves as a coordination point for (2S)-2-hydroxy-3-oxobutyl phosphate. Histidine 93 functions as the Proton donor in the catalytic mechanism. 5-amino-6-(D-ribitylamino)uracil is bound at residue phenylalanine 118. Arginine 132 is a (2S)-2-hydroxy-3-oxobutyl phosphate binding site.

The protein belongs to the DMRL synthase family.

The catalysed reaction is (2S)-2-hydroxy-3-oxobutyl phosphate + 5-amino-6-(D-ribitylamino)uracil = 6,7-dimethyl-8-(1-D-ribityl)lumazine + phosphate + 2 H2O + H(+). It participates in cofactor biosynthesis; riboflavin biosynthesis; riboflavin from 2-hydroxy-3-oxobutyl phosphate and 5-amino-6-(D-ribitylamino)uracil: step 1/2. Its function is as follows. Catalyzes the formation of 6,7-dimethyl-8-ribityllumazine by condensation of 5-amino-6-(D-ribitylamino)uracil with 3,4-dihydroxy-2-butanone 4-phosphate. This is the penultimate step in the biosynthesis of riboflavin. This chain is 6,7-dimethyl-8-ribityllumazine synthase, found in Prochlorococcus marinus subsp. pastoris (strain CCMP1986 / NIES-2087 / MED4).